Consider the following 138-residue polypeptide: Mitochondrial import inner membrane translocase subunit tim-16 (138 aa).

Residues 32–43 (TQQAAARHAAAT) are compositionally biased toward low complexity. Disordered regions lie at residues 32 to 58 (TQQA…NANA) and 118 to 138 (LSRL…NSKE). Residues 44–56 (GQSPSETKENANA) are compositionally biased toward polar residues. A J-like region spans residues 66–119 (ESLQILNVKTPLNREDVEKHYEHLFAINDKAKGGTFYLQSKVYRAKERIDEELS).

This sequence belongs to the TIM16/PAM16 family. In terms of assembly, probable component of the PAM complex at least composed of a mitochondrial HSP70 protein, GrpE, tim-44, tim-16 and tim-14. Associates with the TIM23 complex.

The protein resides in the mitochondrion inner membrane. Its function is as follows. Regulates ATP-dependent protein translocation into the mitochondrial matrix. In Caenorhabditis briggsae, this protein is Mitochondrial import inner membrane translocase subunit tim-16.